The primary structure comprises 182 residues: Putative manganese efflux pump MntP (182 aa).

Transmembrane regions (helical) follow at residues 6-26, 37-57, 71-91, 101-121, 131-151, and 162-182; these read LIPL…VSLG, ILYI…IGMV, HFAG…SSIL, IGIS…SVGL, IITI…GLFI, and YGEI…LFPI.

It belongs to the MntP (TC 9.B.29) family.

The protein resides in the cell membrane. Its function is as follows. Probably functions as a manganese efflux pump. This chain is Putative manganese efflux pump MntP, found in Bacillus thuringiensis subsp. konkukian (strain 97-27).